The primary structure comprises 361 residues: MAQNSLRLVEDKSVDKSKALEAALSQIERAFGKGSIMKLGAKDSVVEIETVSTGSLGLDIALGIGGLPKGRIVEIYGPESSGKTTLALQTIAEAQKKGGICGFVDAEHALDPIYARKLGVDLENLLISQPDTGEQALEITDTLVRSGAIDVLVVDSVAALVPRAEIEGEMGDSLPGMQARLMSQALRKLTASISKSNCMVIFINQIRMKIGVMFGSPETTTGGNALKFYASVRLDIRRIGSVKEREEVVGNQTRVKVVKNKMAPPFKQVEFDIMYGEGVSKTGELIDLGVKAGIVEKSGAWFSYNSQRLGQGRENAKLFLRDNPELLREIETALRQNAGLIADRFLENGGPESEGDEAADM.

77–84 (GPESSGKT) lines the ATP pocket.

This sequence belongs to the RecA family.

It is found in the cytoplasm. In terms of biological role, can catalyze the hydrolysis of ATP in the presence of single-stranded DNA, the ATP-dependent uptake of single-stranded DNA by duplex DNA, and the ATP-dependent hybridization of homologous single-stranded DNAs. It interacts with LexA causing its activation and leading to its autocatalytic cleavage. The sequence is that of Protein RecA from Sinorhizobium medicae (strain WSM419) (Ensifer medicae).